The following is an 803-amino-acid chain: Rho guanine nucleotide exchange factor 7 (803 aa).

An N-acetylmethionine modification is found at methionine 1. A Calponin-homology (CH) domain is found at 1–133; that stretch reads MNSAEQTVTW…SLVTLNKVTA (133 aa). An N-acetylthreonine modification is found at asparagine 2. Phosphoserine is present on residues serine 153 and serine 176. In terms of domain architecture, SH3 spans 184 to 243; sequence NNQLVVRAKFNFQQTNEDELSFSKGDVIHVTRVEEGGWWEGTLNGRTGWFPSNYVREVKA. Phosphoserine occurs at positions 249 and 257. Positions 271–451 constitute a DH domain; it reads YYNVVLQNIL…KNLSAQCQEV (181 aa). A PH domain is found at 473–578; that stretch reads DIKTLGNVTY…WVEHLQKQTK (106 aa). Serine 518, cysteine 560, and valine 579 each carry phosphoserine. A disordered region spans residues 580-655; that stretch reads TSVGNPTIKP…TPKPWSLSCL (76 aa). Positions 593 to 606 are enriched in polar residues; sequence PSHTLPSHPVTPSS. Lysine 645 and serine 664 each carry phosphoserine. Positions 678 to 690 are enriched in basic residues; that stretch reads KTMKKLLPKRKPE. Disordered stretches follow at residues 678–704 and 748–773; these read KTMK…RKST and DDQP…LSED. The segment covering 691–700 has biased composition (basic and acidic residues); it reads RKPSDEEFAS. The residue at position 694 (serine 694) is a Phosphoserine; by CaMK1. Residues 752-765 are compositionally biased toward low complexity; the sequence is SLDSLGRRSSLSRL.

In terms of assembly, interacts with PAK kinases through the SH3 domain. Interacts with GIT1 and TGFB1I1. Interacts with PTK2/FAK1 and RAC1. Interacts with ITCH and PARVB. Interacts with unphosphorylated PAK1. Interacts with SCRIB; interaction is direct and may play a role in regulation of apoptosis. Interacts with FRMPD4 (via N-terminus). Interacts with CaMK1. Interacts with BIN2. Interacts with YWHAZ. Interacts (via PH domain) with NOX1 (via FAD-binding FR-type domain). As to quaternary structure, interacts with SNX27. Phosphorylated by PTK2/FAK1; this promotes interaction with RAC1. Phosphorylated on Ser-694 by CaMK1; enhancement of GEF activity and downstream activation of RAC1.

Its subcellular location is the cell junction. It localises to the focal adhesion. The protein resides in the cell projection. The protein localises to the ruffle. It is found in the cytoplasm. Its subcellular location is the cell cortex. It localises to the lamellipodium. In terms of biological role, acts as a RAC1 guanine nucleotide exchange factor (GEF) and can induce membrane ruffling. Functions in cell migration, attachment and cell spreading. Promotes targeting of RAC1 to focal adhesions. May function as a positive regulator of apoptosis. Downstream of NMDA receptors and CaMKK-CaMK1 signaling cascade, promotes the formation of spines and synapses in hippocampal neurons. The protein is Rho guanine nucleotide exchange factor 7 (ARHGEF7) of Homo sapiens (Human).